The chain runs to 145 residues: Large ribosomal subunit protein uL15 (145 aa).

The tract at residues 1–50 (MLHTIKPVTNARKSTKRLGRGPGSGTGKTSGKGHKGQLARSGKTLRPGFE) is disordered. The span at 20–30 (RGPGSGTGKTS) shows a compositional bias: gly residues.

This sequence belongs to the universal ribosomal protein uL15 family. Part of the 50S ribosomal subunit.

In terms of biological role, binds to the 23S rRNA. This is Large ribosomal subunit protein uL15 from Aster yellows witches'-broom phytoplasma (strain AYWB).